The following is an 80-amino-acid chain: Exodeoxyribonuclease 7 small subunit (80 aa).

It belongs to the XseB family. Heterooligomer composed of large and small subunits.

Its subcellular location is the cytoplasm. It catalyses the reaction Exonucleolytic cleavage in either 5'- to 3'- or 3'- to 5'-direction to yield nucleoside 5'-phosphates.. Functionally, bidirectionally degrades single-stranded DNA into large acid-insoluble oligonucleotides, which are then degraded further into small acid-soluble oligonucleotides. This is Exodeoxyribonuclease 7 small subunit from Rickettsia conorii (strain ATCC VR-613 / Malish 7).